The sequence spans 853 residues: DNA mismatch repair protein MutS (853 aa).

614–621 (GPNMGGKS) is a binding site for ATP.

Belongs to the DNA mismatch repair MutS family.

Functionally, this protein is involved in the repair of mismatches in DNA. It is possible that it carries out the mismatch recognition step. This protein has a weak ATPase activity. This is DNA mismatch repair protein MutS from Escherichia coli (strain 55989 / EAEC).